The sequence spans 305 residues: Ornithine carbamoyltransferase (305 aa).

Carbamoyl phosphate is bound by residues 48–51 (STRT), R99, and 126–129 (HPCQ). Residues N157, D222, and 226-227 (SM) contribute to the L-ornithine site. Carbamoyl phosphate-binding positions include 262–263 (CL) and R290.

Belongs to the aspartate/ornithine carbamoyltransferase superfamily. OTCase family.

The protein localises to the cytoplasm. It catalyses the reaction carbamoyl phosphate + L-ornithine = L-citrulline + phosphate + H(+). It participates in amino-acid biosynthesis; L-arginine biosynthesis; L-arginine from L-ornithine and carbamoyl phosphate: step 1/3. Functionally, reversibly catalyzes the transfer of the carbamoyl group from carbamoyl phosphate (CP) to the N(epsilon) atom of ornithine (ORN) to produce L-citrulline. In Methanocaldococcus jannaschii (strain ATCC 43067 / DSM 2661 / JAL-1 / JCM 10045 / NBRC 100440) (Methanococcus jannaschii), this protein is Ornithine carbamoyltransferase (argF).